Reading from the N-terminus, the 237-residue chain is Class B acid phosphatase (237 aa).

The N-terminal stretch at 1–25 is a signal peptide; the sequence is MRKVSLALSAACLLFTLNYTASALA. The active-site Nucleophile is the Asp69. The Mg(2+) site is built by Asp69 and Asp71. Asp71 functions as the Proton donor in the catalytic mechanism. Residues 137 to 138 and Lys177 each bind substrate; that span reads TG. Asp192 provides a ligand contact to Mg(2+).

Belongs to the class B bacterial acid phosphatase family. As to quaternary structure, homotetramer. Requires Mg(2+) as cofactor.

The protein resides in the periplasm. The enzyme catalyses a phosphate monoester + H2O = an alcohol + phosphate. Functionally, dephosphorylates several organic phosphate monoesters. Also has a phosphotransferase activity catalyzing the transfer of low-energy phosphate groups from organic phosphate monoesters to free hydroxyl groups of various organic compounds. The chain is Class B acid phosphatase from Citrobacter rodentium (strain ICC168) (Citrobacter freundii biotype 4280).